A 118-amino-acid polypeptide reads, in one-letter code: Large ribosomal subunit protein bL20 (118 aa).

The protein belongs to the bacterial ribosomal protein bL20 family.

Functionally, binds directly to 23S ribosomal RNA and is necessary for the in vitro assembly process of the 50S ribosomal subunit. It is not involved in the protein synthesizing functions of that subunit. The protein is Large ribosomal subunit protein bL20 of Shigella dysenteriae serotype 1 (strain Sd197).